A 533-amino-acid chain; its full sequence is Putative adhesin domain-containing protein LiaX (533 aa).

Positions 1-277 (MKERERVLEL…EFNYPNPQAS (277 aa)) are binds the antibiotic daptomycin (DAP) and the antimicrobial peptide human LL-37, under physiologically relevant concentrations. Protects the OG1RF and S613 strains from LL-37-mediated killing in a concentration-dependent manner. The segment at 63–89 (NALEKGESEGPTVDSFEENTQDSAEKD) is disordered. Residues 83–186 (QDSAEKDREN…EEELKNIRKE (104 aa)) are a coiled coil. The tract at residues 279-526 (IDVKVANGTV…INASTTTGSI (248 aa)) is putative adhesin region. The involved in cell membrane remodeling stretch occupies residues 289–526 (VFKTWDQEDV…INASTTTGSI (238 aa)).

Post-translationally, may undergo proteolytic cleavage, allowing release of the N-terminal region into the extracellular environment.

Its subcellular location is the secreted. The protein resides in the cell wall. It is found in the cell membrane. Involved in cell membrane remodeling, perhaps acting by negative modulation of the liaFSR and liaXYZ gene clusters, thereby regulating content and localization of anionic phospholipids. Binds to the antibiotic daptomycin (DAP) and to cationic antimicrobial peptides, such as human LL-37, perhaps functioning as a sensor that activates the cell envelope stress response. The protein is Putative adhesin domain-containing protein LiaX of Enterococcus faecalis (strain ATCC 700802 / V583).